Consider the following 157-residue polypeptide: uncharacterized protein (157 aa).

One can recognise an N-acetyltransferase domain in the interval 9–154; the sequence is LLINYKTLDE…ETNSNAITNE (146 aa).

This is an uncharacterized protein from Bacillus mycoides (strain KBAB4) (Bacillus weihenstephanensis).